We begin with the raw amino-acid sequence, 349 residues long: MNSFSGSLEKAKTLTENNAPMVDPFGRAITYLRVSVTDRCDFRCTYCMSEHMTFLPKKDLLTLEELDRLCSVFITRGVRKLRLTGGEPLVRKNIMSLVRNLGRHVQSGTLDELTLTTNGSQLAKFAAELADCGVRRINVSLDTLDAQKFRQITRWGDIDRVMEGFDAAQAAGIKVKLNAVALKDFNDAEMPELMRFAHGRGMDLTVIETMPMGEIEEDRTDRYLPLSQLRADLERNFTLVDSDYQTGGPARYVTVKETGGRLGFITPMTHNFCESCNRVRLTCTGTLYMCLGQDDAADLRTALRASDSDAYLSAAIDEALLRKPKGHDFIIDRTHNRPAVSRHMSVTGG.

The region spanning 24–249 (PFGRAITYLR…VDSDYQTGGP (226 aa)) is the Radical SAM core domain. Arginine 33 contacts GTP. Residues cysteine 40 and cysteine 44 each contribute to the [4Fe-4S] cluster site. Residue tyrosine 46 participates in S-adenosyl-L-methionine binding. Cysteine 47 provides a ligand contact to [4Fe-4S] cluster. Arginine 82 lines the GTP pocket. Glycine 86 provides a ligand contact to S-adenosyl-L-methionine. Residue threonine 116 coordinates GTP. Residue serine 140 participates in S-adenosyl-L-methionine binding. Lysine 176 is a GTP binding site. Residue methionine 210 coordinates S-adenosyl-L-methionine. [4Fe-4S] cluster is bound by residues cysteine 273 and cysteine 276. 278–280 (RVR) is a binding site for GTP. Position 290 (cysteine 290) interacts with [4Fe-4S] cluster.

This sequence belongs to the radical SAM superfamily. MoaA family. As to quaternary structure, monomer and homodimer. [4Fe-4S] cluster serves as cofactor.

The enzyme catalyses GTP + AH2 + S-adenosyl-L-methionine = (8S)-3',8-cyclo-7,8-dihydroguanosine 5'-triphosphate + 5'-deoxyadenosine + L-methionine + A + H(+). It participates in cofactor biosynthesis; molybdopterin biosynthesis. Its function is as follows. Catalyzes the cyclization of GTP to (8S)-3',8-cyclo-7,8-dihydroguanosine 5'-triphosphate. The chain is GTP 3',8-cyclase from Agrobacterium fabrum (strain C58 / ATCC 33970) (Agrobacterium tumefaciens (strain C58)).